The primary structure comprises 255 residues: Glutamate racemase (255 aa).

Substrate is bound by residues 7–8 and 39–40; these read DS and YG. Cys70 serves as the catalytic Proton donor/acceptor. A substrate-binding site is contributed by 71 to 72; it reads NT. Cys181 serves as the catalytic Proton donor/acceptor. Residue 182-183 coordinates substrate; it reads TH.

Belongs to the aspartate/glutamate racemases family.

It carries out the reaction L-glutamate = D-glutamate. The protein operates within cell wall biogenesis; peptidoglycan biosynthesis. In terms of biological role, provides the (R)-glutamate required for cell wall biosynthesis. This is Glutamate racemase from Helicobacter pylori (strain ATCC 700392 / 26695) (Campylobacter pylori).